The following is a 320-amino-acid chain: Polynucleotide 5'-triphosphatase CTL1 (320 aa).

The segment covering 1 to 12 has biased composition (polar residues); sequence MSDQPETPSNSR. The disordered stretch occupies residues 1–23; it reads MSDQPETPSNSRNSHENVGAKKA. The segment covering 13–23 has biased composition (basic and acidic residues); the sequence is NSHENVGAKKA.

It belongs to the fungal TPase family. It depends on Mg(2+) as a cofactor. Requires Mn(2+) as cofactor.

It is found in the cytoplasm. Its subcellular location is the nucleus. It carries out the reaction a 5'-end triphospho-ribonucleoside in mRNA + H2O = a 5'-end diphospho-ribonucleoside in mRNA + phosphate + H(+). Its function is as follows. Probably involved in an RNA processing event other than mRNA capping. Releases gamma-phosphate from the 5'-end of RNA to produce a diphosphate terminus. In Saccharomyces cerevisiae (strain ATCC 204508 / S288c) (Baker's yeast), this protein is Polynucleotide 5'-triphosphatase CTL1.